The following is a 402-amino-acid chain: MKISLFGYGKTTRAIAENLVDKFGPFDIYDDHFIETKKDTLGNLLLNPNDFDDNLSDIEIPSPGFPPKHKLIQKAKNLQSEYDFFYDIMPKSVWISGTNGKTTTTQMATHLLSHIGAVMGGNVGTPLAELDPYAKLWILETSSFTLHYTHKAKPEIYALLPISPDHLSWHGSFDNYVQDKLSVLKRMNECDVAILPKIYANTPTKAHKISYEDEKDLAVKFGIDTEKISFKSPFLLDAIMALAIEKILLDTLSYELLNSFVMEKNKLEELKDSQNRLWVNDTKATNESAVMAALNRYKDKKIHLIIGGDDKGVDLSNLFDFMKNFNIELYAIGISTEKMLDYAKKANLKAYKCEVLSKAVNEISNHLRVNEVALLSPACASLDQFNSYAERGKVFKECVNKI.

Residue 97–103 coordinates ATP; it reads GTNGKTT.

Belongs to the MurCDEF family.

The protein localises to the cytoplasm. The catalysed reaction is UDP-N-acetyl-alpha-D-muramoyl-L-alanine + D-glutamate + ATP = UDP-N-acetyl-alpha-D-muramoyl-L-alanyl-D-glutamate + ADP + phosphate + H(+). It functions in the pathway cell wall biogenesis; peptidoglycan biosynthesis. Cell wall formation. Catalyzes the addition of glutamate to the nucleotide precursor UDP-N-acetylmuramoyl-L-alanine (UMA). The protein is UDP-N-acetylmuramoylalanine--D-glutamate ligase of Campylobacter jejuni subsp. jejuni serotype O:23/36 (strain 81-176).